The following is a 242-amino-acid chain: MINIGIHGSNGRMGTQIRLCLEDDEQAKASAFFDQGSNYEDFFNKCDVIIDFSTPKGCEDLLLYARSNPKPLVIGTTGLDTKQNELMQSASITMPILYATNMSLGVAILKKLSYLASEALRDFDIEILEMHHNKKKDAPSGTAMTLAQNVAKARNLDLEKVRVSGRDGIIGQRSKDEIAVMSLRGGDIVGSHRVGFYNEGEFIELNHSATSRATFAKGAIKCAKWLVSQENGLYDIDDCLGI.

NAD(+) is bound by residues 8–13 (GSNGRM), 75–77 (GTT), and 99–102 (ATNM). Catalysis depends on H131, which acts as the Proton donor/acceptor. H132 provides a ligand contact to (S)-2,3,4,5-tetrahydrodipicolinate. The Proton donor role is filled by K135. 141–142 (GT) is a binding site for (S)-2,3,4,5-tetrahydrodipicolinate.

This sequence belongs to the DapB family.

It localises to the cytoplasm. It carries out the reaction (S)-2,3,4,5-tetrahydrodipicolinate + NAD(+) + H2O = (2S,4S)-4-hydroxy-2,3,4,5-tetrahydrodipicolinate + NADH + H(+). It catalyses the reaction (S)-2,3,4,5-tetrahydrodipicolinate + NADP(+) + H2O = (2S,4S)-4-hydroxy-2,3,4,5-tetrahydrodipicolinate + NADPH + H(+). It participates in amino-acid biosynthesis; L-lysine biosynthesis via DAP pathway; (S)-tetrahydrodipicolinate from L-aspartate: step 4/4. Its function is as follows. Catalyzes the conversion of 4-hydroxy-tetrahydrodipicolinate (HTPA) to tetrahydrodipicolinate. In Campylobacter lari (strain RM2100 / D67 / ATCC BAA-1060), this protein is 4-hydroxy-tetrahydrodipicolinate reductase.